A 743-amino-acid polypeptide reads, in one-letter code: MERPPVQHGAVCGPWDMKDRLGTGGFGNVCLYQNRETGELKAIKSCRLELSVKNKERWCQEIQIMKRLNHPNVVKACDVPPEMDFLVNDVPHLAMEYCAGGDLRKLLNKPENCCGLKESQVLNLISDIGSGIQYLHENRIIHRDLKPENIVLQECNGKTVHKIIDLGYAKDLDQGSLCTSFVGTLQYLAPELFENKPYSVTVDYWSFGTMAFECIAGFRPFLHNMQPFTWHEKIKKKDHKHIYAYEEMSGEIRFSTSLPEPNNLCSIIVDKIETWLQLLLNWDPVQRGGGIDCGRPRCFMLMDQIFSLKIVHILNMTSAKIHSFHLQPEESLHTLQSRIERETGISTCNQELLLEMGVSLDPRKPASQCVIDGVKGWDSYMVYLFDKSKTVYEGPFQSRSLSECLNYIVQDSKVQLPIPQLRKVWAEAVHYVSGLKEDYSRLFQGQRAAMLSLLRFNTNLTKMKNTMVSASQQLDAKLQFFKRSIEIDLERYSDQMAYGISSEKMLRAWKEMEDKAVCFGKAGEIHFLDETIMGLHTEIVELQRSPCARRQGDVMEHLEQRAMELYKQLKPRSPDKAYSDSTEMVKILVQTVQGQDRVLKELFGHLSKLLGCKQKIIDLLPQIEMTVNNIKEADSSLMQMQAKRQREIWHLLKIACTQSSTRSLVTASGETPITSRTSAWSDQSSPQALFSMLTSKDKGREILRHTIDKNTDYQKLLSNLILQTQTTMEQTSLMSMDFSWLNQ.

The region spanning W15–M300 is the Protein kinase domain. ATP contacts are provided by residues L21–V29 and K44. D144 functions as the Proton acceptor in the catalytic mechanism. A leucine-zipper region spans residues L453–L474. Residues M736–L741 form an NEMO-binding region.

This sequence belongs to the protein kinase superfamily. Ser/Thr protein kinase family. I-kappa-B kinase subfamily.

It localises to the cytoplasm. It is found in the nucleus. The catalysed reaction is L-seryl-[I-kappa-B protein] + ATP = O-phospho-L-seryl-[I-kappa-B protein] + ADP + H(+). Its activity is regulated as follows. Activated when phosphorylated and inactivated when dephosphorylated. Functionally, phosphorylates inhibitors of NF-kappa-B thus leading to the dissociation of the inhibitor/NF-kappa-B complex and ultimately the degradation of the inhibitor. Phosphorylates 'Ser-10' of histone H3 at NF-kappa-B-regulated promoters during inflammatory responses triggered by cytokines. The polypeptide is Inhibitor of nuclear factor kappa-B kinase subunit alpha (chuk) (Xenopus laevis (African clawed frog)).